We begin with the raw amino-acid sequence, 79 residues long: D-alanyl carrier protein (79 aa).

Positions 1-77 (MDIKAEVIEI…KIVEGVTELR (77 aa)) constitute a Carrier domain. Serine 35 is subject to O-(pantetheine 4'-phosphoryl)serine.

Belongs to the DltC family. In terms of processing, 4'-phosphopantetheine is transferred from CoA to a specific serine of apo-DCP.

The protein resides in the cytoplasm. It functions in the pathway cell wall biogenesis; lipoteichoic acid biosynthesis. In terms of biological role, carrier protein involved in the D-alanylation of lipoteichoic acid (LTA). The loading of thioester-linked D-alanine onto DltC is catalyzed by D-alanine--D-alanyl carrier protein ligase DltA. The DltC-carried D-alanyl group is further transferred to cell membrane phosphatidylglycerol (PG) by forming an ester bond, probably catalyzed by DltD. D-alanylation of LTA plays an important role in modulating the properties of the cell wall in Gram-positive bacteria, influencing the net charge of the cell wall. The protein is D-alanyl carrier protein of Streptococcus sanguinis (strain SK36).